The primary structure comprises 404 residues: Intracellular hyaluronan-binding protein 4.L (404 aa).

Disordered stretches follow at residues 1–21 (MRLD…MQDN), 51–288 (LTRR…QEMS), and 359–379 (LTRP…REEA). Positions 8 to 19 (ETPSSPVNTEMQ) are enriched in polar residues. 3 stretches are compositionally biased toward basic and acidic residues: residues 71–81 (GKKESQKDRKA), 145–159 (KVDR…REVR), and 165–184 (RSNE…DKQM). Residues 188–200 (GGRGGMRGRGRGG) show a composition bias toward gly residues. Basic and acidic residues-rich tracts occupy residues 205 to 233 (TEND…DKRG) and 270 to 281 (EEHAKVPEEKNE).

The protein belongs to the SERBP1-HABP4 family. Associates with ribosomes; promoting ribosome stabilization. Interacts with eef2/eEF2; promoting ribosome stabilization.

The protein resides in the nucleus. Its subcellular location is the cytoplasm. It is found in the stress granule. The protein localises to the nucleolus. It localises to the nucleus speckle. The protein resides in the cajal body. In terms of biological role, ribosome-binding protein that promotes ribosome hibernation, a process during which ribosomes are stabilized in an inactive state and preserved from proteasomal degradation. Acts via its association with eef2/eEF2 factor at the A-site of the ribosome, promoting ribosome stabilization in an inactive state compatible with storage. Plays a key role in ribosome hibernation in the mature egg by promoting ribosome stabilization. Ribosomes, which are produced in large quantities during oogenesis, are stored and translationally repressed in the egg and early embryo. This is Intracellular hyaluronan-binding protein 4.L from Xenopus laevis (African clawed frog).